The primary structure comprises 218 residues: Thiopurine S-methyltransferase (218 aa).

Positions 10, 45, 66, and 123 each coordinate S-adenosyl-L-methionine.

Belongs to the class I-like SAM-binding methyltransferase superfamily. TPMT family.

The protein localises to the cytoplasm. It catalyses the reaction S-adenosyl-L-methionine + a thiopurine = S-adenosyl-L-homocysteine + a thiopurine S-methylether.. This chain is Thiopurine S-methyltransferase, found in Xanthomonas campestris pv. campestris (strain 8004).